Here is a 62-residue protein sequence, read N- to C-terminus: Large ribosomal subunit protein uL29 (62 aa).

Belongs to the universal ribosomal protein uL29 family.

The chain is Large ribosomal subunit protein uL29 from Chromobacterium violaceum (strain ATCC 12472 / DSM 30191 / JCM 1249 / CCUG 213 / NBRC 12614 / NCIMB 9131 / NCTC 9757 / MK).